The sequence spans 777 residues: Endonuclease MutS2 (777 aa).

328–335 (GPNTGGKT) is a binding site for ATP. The region spanning 702–777 (LDLRGKRYEE…GSGATIVIFK (76 aa)) is the Smr domain.

This sequence belongs to the DNA mismatch repair MutS family. MutS2 subfamily. Homodimer. Binds to stalled ribosomes, contacting rRNA.

Endonuclease that is involved in the suppression of homologous recombination and thus may have a key role in the control of bacterial genetic diversity. In terms of biological role, acts as a ribosome collision sensor, splitting the ribosome into its 2 subunits. Detects stalled/collided 70S ribosomes which it binds and splits by an ATP-hydrolysis driven conformational change. Acts upstream of the ribosome quality control system (RQC), a ribosome-associated complex that mediates the extraction of incompletely synthesized nascent chains from stalled ribosomes and their subsequent degradation. Probably generates substrates for RQC. The protein is Endonuclease MutS2 of Streptococcus sanguinis (strain SK36).